The following is a 179-amino-acid chain: ATP-dependent protease subunit HslV (179 aa).

Thr-7 is an active-site residue. Na(+) contacts are provided by Gly-162, Cys-165, and Thr-168.

This sequence belongs to the peptidase T1B family. HslV subfamily. As to quaternary structure, a double ring-shaped homohexamer of HslV is capped on each side by a ring-shaped HslU homohexamer. The assembly of the HslU/HslV complex is dependent on binding of ATP.

The protein localises to the cytoplasm. The enzyme catalyses ATP-dependent cleavage of peptide bonds with broad specificity.. With respect to regulation, allosterically activated by HslU binding. Its function is as follows. Protease subunit of a proteasome-like degradation complex believed to be a general protein degrading machinery. The protein is ATP-dependent protease subunit HslV of Bordetella bronchiseptica (strain ATCC BAA-588 / NCTC 13252 / RB50) (Alcaligenes bronchisepticus).